The primary structure comprises 357 residues: Peptide chain release factor 1 (357 aa).

At Q234 the chain carries N5-methylglutamine.

The protein belongs to the prokaryotic/mitochondrial release factor family. In terms of processing, methylated by PrmC. Methylation increases the termination efficiency of RF1.

It is found in the cytoplasm. Functionally, peptide chain release factor 1 directs the termination of translation in response to the peptide chain termination codons UAG and UAA. This Frankia casuarinae (strain DSM 45818 / CECT 9043 / HFP020203 / CcI3) protein is Peptide chain release factor 1.